Reading from the N-terminus, the 102-residue chain is Feather keratin (102 aa).

Position 1 is an N-acetylserine (Ser1).

This sequence belongs to the avian keratin family. The avian keratins (F-ker, S-ker, C-ker and B-ker) are a complex mixture of very similar polypeptides.

The chain is Feather keratin from Dromaius novaehollandiae (Emu).